The following is a 348-amino-acid chain: Flavonol synthase/flavanone 3-hydroxylase (348 aa).

One can recognise a Fe2OG dioxygenase domain in the interval 209–309 (EIVYLLKINY…RMSWPVFLEP (101 aa)). 3 residues coordinate Fe cation: H234, D236, and H290.

Belongs to the iron/ascorbate-dependent oxidoreductase family. The cofactor is L-ascorbate. It depends on Fe cation as a cofactor.

The protein resides in the cytoplasm. The catalysed reaction is a (2R,3R)-dihydroflavonol + 2-oxoglutarate + O2 = a flavonol + succinate + CO2 + H2O. It catalyses the reaction a (2S)-flavan-4-one + 2-oxoglutarate + O2 = a (2R,3R)-dihydroflavonol + succinate + CO2. It participates in secondary metabolite biosynthesis; flavonoid biosynthesis. Its function is as follows. Catalyzes the formation of flavonols from dihydroflavonols. It can act on dihydrokaempferol to produce kaempferol, on dihydroquercetin to produce quercitin and on dihydromyricetin to produce myricetin. The polypeptide is Flavonol synthase/flavanone 3-hydroxylase (FL) (Petunia hybrida (Petunia)).